The primary structure comprises 104 residues: Pyrimidine/purine nucleoside phosphorylase (104 aa).

The protein belongs to the nucleoside phosphorylase PpnP family.

The catalysed reaction is a purine D-ribonucleoside + phosphate = a purine nucleobase + alpha-D-ribose 1-phosphate. The enzyme catalyses adenosine + phosphate = alpha-D-ribose 1-phosphate + adenine. It catalyses the reaction cytidine + phosphate = cytosine + alpha-D-ribose 1-phosphate. It carries out the reaction guanosine + phosphate = alpha-D-ribose 1-phosphate + guanine. The catalysed reaction is inosine + phosphate = alpha-D-ribose 1-phosphate + hypoxanthine. The enzyme catalyses thymidine + phosphate = 2-deoxy-alpha-D-ribose 1-phosphate + thymine. It catalyses the reaction uridine + phosphate = alpha-D-ribose 1-phosphate + uracil. It carries out the reaction xanthosine + phosphate = alpha-D-ribose 1-phosphate + xanthine. Catalyzes the phosphorolysis of diverse nucleosides, yielding D-ribose 1-phosphate and the respective free bases. Can use uridine, adenosine, guanosine, cytidine, thymidine, inosine and xanthosine as substrates. Also catalyzes the reverse reactions. In Geobacter sulfurreducens (strain ATCC 51573 / DSM 12127 / PCA), this protein is Pyrimidine/purine nucleoside phosphorylase.